Consider the following 334-residue polypeptide: tRNA uridine(34) hydroxylase (334 aa).

The region spanning 123 to 217 (SDPDVILVDT…YLEEVKAEES (95 aa)) is the Rhodanese domain. Cys177 serves as the catalytic Cysteine persulfide intermediate.

This sequence belongs to the TrhO family.

It carries out the reaction uridine(34) in tRNA + AH2 + O2 = 5-hydroxyuridine(34) in tRNA + A + H2O. Catalyzes oxygen-dependent 5-hydroxyuridine (ho5U) modification at position 34 in tRNAs. This Shewanella baltica (strain OS223) protein is tRNA uridine(34) hydroxylase.